The primary structure comprises 1174 residues: Male determiner protein Mdmd(Y) (1174 aa).

The segment covering 1-15 (MNATDAESRKPENKP) has biased composition (basic and acidic residues). Disordered stretches follow at residues 1 to 51 (MNAT…SGQR), 79 to 109 (RKDG…HPVE), and 136 to 259 (KQLS…LRRS). Over residues 16–35 (SSESSSSGSTSGSSDGEVSS) the composition is skewed to low complexity. Residues 36–47 (KTYFKNNKSKVL) are compositionally biased toward polar residues. Over residues 79-92 (RKDGSNEMLPKEDS) the composition is skewed to basic and acidic residues. A compositionally biased stretch (low complexity) spans 138-153 (LSAYRSRSRSTRLSYS). Basic residues predominate over residues 167 to 180 (SRYKKSVLRNRRTS). Basic and acidic residues predominate over residues 183–200 (HGRDSSTTKRSVSRDKDN). Positions 201 to 223 (RLRRRIGSSRSHTRSHSRFRRSE) are enriched in basic residues. Basic and acidic residues predominate over residues 235–259 (RSQERRHERRRSMSSDYERIALRRS). The MIF4G domain occupies 348–531 (KKYIHGYINK…KVLFQVRRDG (184 aa)). A compositionally biased stretch (low complexity) spans 597–608 (DSDGSFGSGSNS). A disordered region spans residues 597–616 (DSDGSFGSGSNSETALSDCD). Residues 641–757 (ALRRTIYLTL…SWDVLDCIKL (117 aa)) form the MI domain. Positions 840 to 857 (SAPSSSSSSSLSSELSAP) are enriched in low complexity. 2 disordered regions span residues 840-1045 (SAPS…SRTK) and 1089-1135 (KGGP…SREY). 2 stretches are compositionally biased toward basic residues: residues 869–886 (KKKH…KNPS) and 895–909 (IVGK…KTIK). A compositionally biased stretch (basic and acidic residues) spans 910-924 (RRTDKDNSSSKDNFL). Over residues 926-957 (SESSSNESISLDSLSSELFAPSSYSSSESSND) the composition is skewed to low complexity. Residues 963-1001 (KHKGKNKKMTKKKNPSNKREKTKKKLSKNKKAPNKNTKK) show a composition bias toward basic residues. A compositionally biased stretch (low complexity) spans 1010–1020 (SSESSISESKS). Positions 1034-1045 (RKKRVTSKSRTK) are enriched in basic residues. Basic and acidic residues predominate over residues 1089–1118 (KGGPNCRKDNYGNRQNHEISQRHDSEIKRR). Residues 1119–1130 (REERKKRHHEKN) are compositionally biased toward basic residues.

This sequence belongs to the CWC22 family. Component of the spliceosome C complex.

It localises to the nucleus speckle. Its function is as follows. Male determiner protein (M-factor) that controls male somatic sexual differentiation. Acts as a dominant factor that regulates the mRNA splicing of transformer (tra) and doublesex (dsx) transcripts and promotes expression of male splice forms of tra and dsx. Probably acts as a component of the spliceosome C complex required for mRNA splicing factor and exon-junction complex (EJC) assembly. Hinders eIF4AIII from non-specifically binding RNA and escorts it to the splicing machinery to promote EJC assembly on mature mRNAs. This chain is Male determiner protein Mdmd(Y), found in Musca domestica (House fly).